The primary structure comprises 344 residues: uncharacterized protein (344 aa).

Residues M1–A28 form the signal peptide.

The protein belongs to the bacterial solute-binding protein 1 family. WtpA subfamily.

This is an uncharacterized protein from Methanococcus maripaludis (strain C7 / ATCC BAA-1331).